The chain runs to 393 residues: Formate-dependent phosphoribosylglycinamide formyltransferase (393 aa).

N(1)-(5-phospho-beta-D-ribosyl)glycinamide contacts are provided by residues 22 to 23 (EL) and E82. ATP is bound by residues R114, K155, 160–165 (SSGKGQ), 195–198 (EGFV), and E203. Residues 119–308 (RLAAEELGLP…EFALHVRAFT (190 aa)) enclose the ATP-grasp domain. The Mg(2+) site is built by E267 and E279. N(1)-(5-phospho-beta-D-ribosyl)glycinamide is bound by residues D286, K356, and 363–364 (RR).

It belongs to the PurK/PurT family. In terms of assembly, homodimer.

It catalyses the reaction N(1)-(5-phospho-beta-D-ribosyl)glycinamide + formate + ATP = N(2)-formyl-N(1)-(5-phospho-beta-D-ribosyl)glycinamide + ADP + phosphate + H(+). Its pathway is purine metabolism; IMP biosynthesis via de novo pathway; N(2)-formyl-N(1)-(5-phospho-D-ribosyl)glycinamide from N(1)-(5-phospho-D-ribosyl)glycinamide (formate route): step 1/1. Involved in the de novo purine biosynthesis. Catalyzes the transfer of formate to 5-phospho-ribosyl-glycinamide (GAR), producing 5-phospho-ribosyl-N-formylglycinamide (FGAR). Formate is provided by PurU via hydrolysis of 10-formyl-tetrahydrofolate. The chain is Formate-dependent phosphoribosylglycinamide formyltransferase from Vibrio cholerae serotype O1 (strain M66-2).